The primary structure comprises 884 residues: Probable leucine-rich repeat receptor-like protein kinase At2g28990 (884 aa).

A signal peptide spans 1-19 (MKIHLLLAMIGTFVVIIGA). The Extracellular segment spans residues 20–508 (QDQEGFISLD…TEKKNKFLLP (489 aa)). Asparagine 70, asparagine 177, asparagine 217, asparagine 231, asparagine 251, asparagine 284, asparagine 298, asparagine 334, asparagine 418, asparagine 427, asparagine 438, asparagine 459, and asparagine 464 each carry an N-linked (GlcNAc...) asparagine glycan. 3 LRR repeats span residues 404–427 (SPTI…ILQN), 428–451 (FTQL…FLAN), and 452–476 (MKTL…LLDK). Residues 509-529 (VIASAASLVIVVVVVALFFVF) traverse the membrane as a helical segment. Residues 530 to 884 (RKKKASPSNL…IYNEVIPQAR (355 aa)) are Cytoplasmic-facing. Residues 535–559 (SPSNLHAPPSMPVSNPGHNSQSESS) form a disordered region. Residues 546-559 (PVSNPGHNSQSESS) show a composition bias toward polar residues. The residue at position 568 (threonine 568) is a Phosphothreonine. In terms of domain architecture, Protein kinase spans 577–850 (NNFDKALGEG…RVVNELKECL (274 aa)). Residues 583–591 (LGEGGFGVV) and lysine 605 each bind ATP. Tyrosine 650 carries the phosphotyrosine modification. The Proton acceptor role is filled by aspartate 702. Phosphoserine is present on serine 736. A phosphothreonine mark is found at threonine 737 and threonine 742. Tyrosine 750 is modified (phosphotyrosine).

The protein belongs to the protein kinase superfamily. Ser/Thr protein kinase family. As to quaternary structure, binds to the ammonium transporter AMT1-1.

It is found in the membrane. The catalysed reaction is L-seryl-[protein] + ATP = O-phospho-L-seryl-[protein] + ADP + H(+). It carries out the reaction L-threonyl-[protein] + ATP = O-phospho-L-threonyl-[protein] + ADP + H(+). The protein is Probable leucine-rich repeat receptor-like protein kinase At2g28990 of Arabidopsis thaliana (Mouse-ear cress).